The following is a 739-amino-acid chain: Phosphoribosylformylglycinamidine synthase subunit PurL (739 aa).

His-53 is an active-site residue. ATP-binding residues include Tyr-56 and Lys-95. Position 97 (Glu-97) interacts with Mg(2+). Substrate is bound by residues 98-101 and Arg-120; that span reads SHNH. Residue His-99 is the Proton acceptor of the active site. Asp-121 serves as a coordination point for Mg(2+). Residue Gln-244 coordinates substrate. Asp-274 serves as a coordination point for Mg(2+). Position 318–320 (318–320) interacts with substrate; that stretch reads ESQ. The ATP site is built by Asp-501 and Gly-538. Mg(2+) is bound at residue Asn-539. Ser-541 lines the substrate pocket.

Belongs to the FGAMS family. Monomer. Part of the FGAM synthase complex composed of 1 PurL, 1 PurQ and 2 PurS subunits.

The protein localises to the cytoplasm. It carries out the reaction N(2)-formyl-N(1)-(5-phospho-beta-D-ribosyl)glycinamide + L-glutamine + ATP + H2O = 2-formamido-N(1)-(5-O-phospho-beta-D-ribosyl)acetamidine + L-glutamate + ADP + phosphate + H(+). The protein operates within purine metabolism; IMP biosynthesis via de novo pathway; 5-amino-1-(5-phospho-D-ribosyl)imidazole from N(2)-formyl-N(1)-(5-phospho-D-ribosyl)glycinamide: step 1/2. Functionally, part of the phosphoribosylformylglycinamidine synthase complex involved in the purines biosynthetic pathway. Catalyzes the ATP-dependent conversion of formylglycinamide ribonucleotide (FGAR) and glutamine to yield formylglycinamidine ribonucleotide (FGAM) and glutamate. The FGAM synthase complex is composed of three subunits. PurQ produces an ammonia molecule by converting glutamine to glutamate. PurL transfers the ammonia molecule to FGAR to form FGAM in an ATP-dependent manner. PurS interacts with PurQ and PurL and is thought to assist in the transfer of the ammonia molecule from PurQ to PurL. The protein is Phosphoribosylformylglycinamidine synthase subunit PurL of Listeria innocua serovar 6a (strain ATCC BAA-680 / CLIP 11262).